The following is a 161-amino-acid chain: pEARLI1-like lipid transfer protein 1 (161 aa).

Positions Met-1–Ala-25 are cleaved as a signal peptide. The stretch at Pro-32–Val-39 is one A-1 repeat. Positions Pro-32–Asn-76 are disordered. Positions Ser-33 to Thr-70 are enriched in pro residues. Positions Pro-34–Cys-49 are 2 X 8 AA tandem repeats A of P-S-P-K-P-K-P-V. The stretch at Pro-40 to Val-47 is one A-2 repeat.

It belongs to the plant LTP family. PEARLI1 subfamily. In terms of assembly, self-interacts and binds to DIR1. Interacts with PDLP1.

The protein resides in the secreted. Its subcellular location is the cell wall. The protein localises to the endoplasmic reticulum. It is found in the cell junction. It localises to the plasmodesma. The protein resides in the plastid. Its subcellular location is the chloroplast. Functionally, probable lipid transfer protein (LTP). Seems to control the flowering process and lignin synthesis. Together with DIR1, required for glycerol-3-phosphate- (G3P) and azelaic acid- (AA) induced systemic acquired resistance (SAR). Component of plant systemic immunity involved in priming defenses in a AA-dependent manner, by modulating production and/or translocation of a mobile signal(s) during SAR. Confers resistance to Botrytis cinerea and Pseudomonas syringae pv. tomato DC3000 and PmaDG3. May be involved in induced systemic resistance (ISR) mediated by non-pathogenic bacteria (e.g. P. fluorescens GM30). Prevents electrolyte leakage during freezing damage. The sequence is that of pEARLI1-like lipid transfer protein 1 (AZI1) from Arabidopsis thaliana (Mouse-ear cress).